The primary structure comprises 86 residues: YcgL domain-containing protein IL1825 (86 aa).

Residues 1–85 (MLCDVYRSSK…KREELQVNVN (85 aa)) form the YcgL domain.

This Idiomarina loihiensis (strain ATCC BAA-735 / DSM 15497 / L2-TR) protein is YcgL domain-containing protein IL1825.